The sequence spans 347 residues: uncharacterized protein (347 aa).

This is an uncharacterized protein from Caenorhabditis elegans.